A 242-amino-acid chain; its full sequence is Small ribosomal subunit protein uS2 (242 aa).

It belongs to the universal ribosomal protein uS2 family.

The protein is Small ribosomal subunit protein uS2 of Shewanella halifaxensis (strain HAW-EB4).